We begin with the raw amino-acid sequence, 237 residues long: Chalcone--flavanone isomerase (237 aa).

The substrate site is built by T50 and S192.

Belongs to the chalcone isomerase family.

It carries out the reaction a chalcone = a flavanone.. The protein operates within secondary metabolite biosynthesis; flavonoid biosynthesis. Catalyzes the intramolecular cyclization of bicyclic chalcones into tricyclic (S)-flavanones. Responsible for the isomerization of 4,2',4',6'-tetrahydroxychalcone (also termed chalcone) into naringenin. The polypeptide is Chalcone--flavanone isomerase (CHI) (Callistephus chinensis (China aster)).